A 383-amino-acid polypeptide reads, in one-letter code: Chorismate synthase (383 aa).

Positions 39 and 45 each coordinate NADP(+). Residues Arg-128–Ser-130, Gly-291, Lys-306–Thr-310, and Arg-332 contribute to the FMN site.

It belongs to the chorismate synthase family. As to quaternary structure, homotetramer. It depends on FMNH2 as a cofactor.

It carries out the reaction 5-O-(1-carboxyvinyl)-3-phosphoshikimate = chorismate + phosphate. The protein operates within metabolic intermediate biosynthesis; chorismate biosynthesis; chorismate from D-erythrose 4-phosphate and phosphoenolpyruvate: step 7/7. Its function is as follows. Catalyzes the anti-1,4-elimination of the C-3 phosphate and the C-6 proR hydrogen from 5-enolpyruvylshikimate-3-phosphate (EPSP) to yield chorismate, which is the branch point compound that serves as the starting substrate for the three terminal pathways of aromatic amino acid biosynthesis. This reaction introduces a second double bond into the aromatic ring system. This Thermus thermophilus (strain ATCC 27634 / DSM 579 / HB8) protein is Chorismate synthase.